The sequence spans 468 residues: Nuclear pore complex protein Nup50 (468 aa).

The segment covering 1 to 16 (MAKRNAEKELTDRNWD) has biased composition (basic and acidic residues). Residues 1-26 (MAKRNAEKELTDRNWDQEDEAEEVGT) are disordered. Ala-2 carries the post-translational modification N-acetylalanine. Lys-8 carries the post-translational modification N6-acetyllysine. Ser-52 is modified (phosphoserine). Copy 1 of the repeat occupies 76–77 (FG). The segment at 76–304 (FGSGAGGKPL…FSPGNSSLFG (229 aa)) is 5 X 2 AA repeats of F-G. Position 83 is an N6-acetyllysine (Lys-83). Copy 2 of the repeat occupies 113–114 (FG). Disordered stretches follow at residues 122–148 (TTLV…LASS) and 201–224 (HGNS…SPSL). Residue Lys-127 is modified to N6-acetyllysine. Low complexity predominate over residues 137–148 (SQQPSSSGLASS). A binding to CDKN1B region spans residues 144–206 (GLASSKACVG…IEQQHGNSGR (63 aa)). Phosphoserine is present on residues Ser-208 and Ser-221. Repeat unit 3 spans residues 225–226 (FG). Residue Ser-234 is modified to Phosphoserine. The disordered stretch occupies residues 238-269 (FHGNKTEDTPDKKMEVASEKKTDPSSLGATSA). Residues 241 to 260 (NKTEDTPDKKMEVASEKKTD) are compositionally biased toward basic and acidic residues. Phosphothreonine occurs at positions 246 and 259. A Phosphoserine modification is found at Ser-270. Repeat unit 4 spans residues 273–274 (FG). Ser-296 bears the Phosphoserine mark. Repeat unit 5 spans residues 303 to 304 (FG). Residues 304–317 (GKDTTQSKPVSSPF) show a composition bias toward polar residues. Residues 304–345 (GKDTTQSKPVSSPFPTKPLEGQAEGDSGECKGGDEEENDEPP) are disordered. Positions 335–468 (GGDEEENDEP…HKILLEKKDA (134 aa)) constitute a RanBD1 domain. Lys-353 is covalently cross-linked (Glycyl lysine isopeptide (Lys-Gly) (interchain with G-Cter in SUMO2)). Lys-450 bears the N6-acetyllysine mark.

Interacts with Importin alpha-2, Importin beta, Importin beta-2, NUP153, Ran binding protein 7, CDKN1B and itself. Does not interact with TPR. As to expression, ubiquitous. Highest levels in testis, peripheral blood leukocytes and fetal liver.

It localises to the nucleus. It is found in the nuclear pore complex. The protein localises to the nucleus membrane. In terms of biological role, component of the nuclear pore complex that has a direct role in nuclear protein import. Actively displaces NLSs from importin-alpha, and facilitates disassembly of the importin-alpha:beta-cargo complex and importin recycling. Interacts with regulatory proteins of cell cycle progression including CDKN1B. This interaction is required for correct intracellular transport and degradation of CDKN1B. The polypeptide is Nuclear pore complex protein Nup50 (NUP50) (Homo sapiens (Human)).